Here is a 103-residue protein sequence, read N- to C-terminus: Urease subunit beta (103 aa).

It belongs to the urease beta subunit family. As to quaternary structure, heterotrimer of UreA (gamma), UreB (beta) and UreC (alpha) subunits. Three heterotrimers associate to form the active enzyme.

The protein localises to the cytoplasm. It catalyses the reaction urea + 2 H2O + H(+) = hydrogencarbonate + 2 NH4(+). It participates in nitrogen metabolism; urea degradation; CO(2) and NH(3) from urea (urease route): step 1/1. In Streptomyces avermitilis (strain ATCC 31267 / DSM 46492 / JCM 5070 / NBRC 14893 / NCIMB 12804 / NRRL 8165 / MA-4680), this protein is Urease subunit beta.